Here is an 802-residue protein sequence, read N- to C-terminus: Protein enabled homolog (802 aa).

The 111-residue stretch at 1–111 folds into the WH1 domain; sequence MSEQSICQAR…SAMMHALEVL (111 aa). Polar residues predominate over residues 143–155; the sequence is NSQLPAQVQNGPS. The disordered stretch occupies residues 143-166; sequence NSQLPAQVQNGPSQEELEIQRRQL. Residue Ser-144 is modified to Phosphoserine. Residues 154 to 258 adopt a coiled-coil conformation; sequence PSQEELEIQR…ERERRMSNAA (105 aa). Repeat copies occupy residues 175–179, 180–184, 185–189, 190–194, 195–199, 200–204, and 205–209. The 7 X 5 AA tandem repeats of [LM]-E-[QR]-[EQ]-[QR] stretch occupies residues 175-209; the sequence is LERERMERERLERERLERERLERERLEQEQLERQR. The span at 245 to 254 shows a compositional bias: basic and acidic residues; sequence QVEWERERRM. 2 disordered regions span residues 245 to 287 and 341 to 622; these read QVEW…PSYA and ATVP…RPLT. Ser-255 is modified (phosphoserine; by PKA). Residues 255-278 show a composition bias toward low complexity; the sequence is SNAAPSSDSSLSSAPLPEYSSCQP. Polar residues predominate over residues 348 to 361; sequence NKNSRPSSPVNTPS. Residue Ser-383 is modified to Phosphoserine. Residues 386-410 are compositionally biased toward low complexity; it reads IMISSPPGKATGPRPVLPVCVSSPV. The span at 431–464 shows a compositional bias: pro residues; sequence VSPPPTSGPAAPPPPPPPPPPPPPPPLPPPPLPP. Residues 485–505 are compositionally biased toward low complexity; it reads STPSSKPSVLPSPSAGAPASA. Residues 525 to 535 show a composition bias toward polar residues; that stretch reads AASQPAESPTP. Pro residues predominate over residues 542–553; the sequence is PPAPPPPPPLPS. Tyr-557 carries the post-translational modification Phosphotyrosine. The span at 561 to 605 shows a compositional bias: pro residues; it reads LPPPPGPPPPPPLPSTGPPPPPPPPPPLPNQAPPPPPPPPAPPLP. The tract at residues 623 to 643 is EVH2 block A; sequence GLAAAIAGAKLRKVSRVEDGS. An EVH2 region spans residues 623–799; that stretch reads GLAAAIAGAK…DAIRQELSKS (177 aa). A KLKR motif is present at residues 632–635; it reads KLRK. Disordered regions lie at residues 639–675 and 691–764; these read VEDG…GGSG and AEKG…TEGL. Residues 664 to 675 show a composition bias toward gly residues; the sequence is RGNGPLPLGGSG. Positions 674–691 are EVH2 block B; it reads SGLMEEMSALLARRRRIA. Residues 731-760 show a composition bias toward polar residues; sequence RTNTMNGSKSPVISRPKSTPSSQPSANGVQ. Phosphoserine occurs at positions 738 and 740. The tract at residues 765 to 799 is EVH2 block C; sequence DYDRLKQDILDEMRKELAKLKEELIDAIRQELSKS. The stretch at 767-797 forms a coiled coil; sequence DRLKQDILDEMRKELAKLKEELIDAIRQELS.

Belongs to the Ena/VASP family. Homotetramer. Interacts with APBB1IP, APBB1, PFN1 and ROBO4. Isoforms, containing the polyproline-rich regions with PPLP motifs, bind the WW domain of APBB1IP. Isoforms, containing the PPSY motif, bind, in vitro, to the WW2 and WW3 domains of NEDD4 and to the WW1 domain of YAP1. Binds the SH3 domain of BAIAP2-alpha but only after the autoinhibitory region of BAIAP2-alpha has been blocked by interaction with CDC42. Interacts, via the EVH1/WH1 domain, with the Pro-rich domains from VCL, ZYX and Listeria monocytogenes actA and with TES (via LIM domain). The TES LIM domain and the Pro-rich domains from VCL or ZYX compete for the same binding site. Interaction with ZYX is important for targeting ENAH to focal adhesions and enhances production of actin-rich structures at the apical surface of cells. Binds GPHN. Heterotrimer with TES and ACTL7A. Interacts with FAT1 (via EVH1 domains). Interacts, through the Pro-rich region, with the C-terminal SH3 domain of DNMPB. Interacts with PRPF40A. NTN1-induced PKA phosphorylation on Ser-255 directly parallels the formation of filopodial protrusions. Expressed in heart and testis, lower levels in lung, skeletal muscle, kidney, pancreas and brain. Isoform 5 is expressed exclusively in the brain. Isoform 2 is expressed predominantly in brain, testis, ovary and fat. In the brain, isoforms 2 and 5 are expressed at highest levels in the hippocampus, cortex and midbrain, and at lowest levels in the striatum and cerebellum. Isoform 6 is expressed in brain and spleen.

It localises to the cytoplasm. It is found in the cytoskeleton. Its subcellular location is the cell projection. The protein resides in the lamellipodium. The protein localises to the filopodium. It localises to the synapse. It is found in the cell junction. Its subcellular location is the focal adhesion. Functionally, ena/VASP proteins are actin-associated proteins involved in a range of processes dependent on cytoskeleton remodeling and cell polarity such as axon guidance and lamellipodial and filopodial dynamics in migrating cells. ENAH induces the formation of F-actin rich outgrowths in fibroblasts. Acts synergistically with BAIAP2-alpha and downstream of NTN1 to promote filipodia formation. This is Protein enabled homolog (Enah) from Mus musculus (Mouse).